Consider the following 122-residue polypeptide: Biogenesis of lysosome-related organelles complex 1 subunit BLS1 (122 aa).

At serine 33 the chain carries Phosphoserine.

Belongs to the BLOC1S1 family. Component of the biogenesis of lysosome-related organelles complex-1 (BLOC-1) composed of at least BLI1, BLS1, CNL1, KXD1, SNN1 and VAB2.

Its subcellular location is the endosome. In terms of biological role, component of the biogenesis of lysosome-related organelles complex-1 (BLOC-1), a complex involved in endosomal cargo sorting. In Saccharomyces cerevisiae (strain RM11-1a) (Baker's yeast), this protein is Biogenesis of lysosome-related organelles complex 1 subunit BLS1 (BLS1).